The chain runs to 251 residues: 4-hydroxy-tetrahydrodipicolinate reductase (251 aa).

Residues 8–13 (GAKGRM), 76–78 (GTT), and 106–109 (APNF) each bind NAD(+). Histidine 136 functions as the Proton donor/acceptor in the catalytic mechanism. (S)-2,3,4,5-tetrahydrodipicolinate is bound at residue histidine 137. Catalysis depends on lysine 140, which acts as the Proton donor. 146–147 (GT) serves as a coordination point for (S)-2,3,4,5-tetrahydrodipicolinate.

The protein belongs to the DapB family.

The protein localises to the cytoplasm. The catalysed reaction is (S)-2,3,4,5-tetrahydrodipicolinate + NAD(+) + H2O = (2S,4S)-4-hydroxy-2,3,4,5-tetrahydrodipicolinate + NADH + H(+). It carries out the reaction (S)-2,3,4,5-tetrahydrodipicolinate + NADP(+) + H2O = (2S,4S)-4-hydroxy-2,3,4,5-tetrahydrodipicolinate + NADPH + H(+). The protein operates within amino-acid biosynthesis; L-lysine biosynthesis via DAP pathway; (S)-tetrahydrodipicolinate from L-aspartate: step 4/4. Its function is as follows. Catalyzes the conversion of 4-hydroxy-tetrahydrodipicolinate (HTPA) to tetrahydrodipicolinate. The polypeptide is 4-hydroxy-tetrahydrodipicolinate reductase (Bifidobacterium longum subsp. infantis (strain ATCC 15697 / DSM 20088 / JCM 1222 / NCTC 11817 / S12)).